The following is a 1464-amino-acid chain: DNA polymerase III PolC-type (1464 aa).

The Exonuclease domain occupies 426–582 (YVVFDVETTG…YDAEATGRLL (157 aa)).

Belongs to the DNA polymerase type-C family. PolC subfamily.

The protein resides in the cytoplasm. It carries out the reaction DNA(n) + a 2'-deoxyribonucleoside 5'-triphosphate = DNA(n+1) + diphosphate. Required for replicative DNA synthesis. This DNA polymerase also exhibits 3' to 5' exonuclease activity. The protein is DNA polymerase III PolC-type of Streptococcus thermophilus (strain CNRZ 1066).